Here is a 188-residue protein sequence, read N- to C-terminus: Large ribosomal subunit protein uL6 (188 aa).

It belongs to the universal ribosomal protein uL6 family. In terms of assembly, part of the 50S ribosomal subunit.

Functionally, this protein binds to the 23S rRNA, and is important in its secondary structure. It is located near the subunit interface in the base of the L7/L12 stalk, and near the tRNA binding site of the peptidyltransferase center. The protein is Large ribosomal subunit protein uL6 of Myxococcus xanthus (strain DK1622).